Here is a 737-residue protein sequence, read N- to C-terminus: 1,4-alpha-glucan branching enzyme GlgB (737 aa).

Residue aspartate 399 is the Nucleophile of the active site. Glutamate 452 functions as the Proton donor in the catalytic mechanism.

Belongs to the glycosyl hydrolase 13 family. GlgB subfamily. Monomer.

It carries out the reaction Transfers a segment of a (1-&gt;4)-alpha-D-glucan chain to a primary hydroxy group in a similar glucan chain.. It participates in glycan biosynthesis; glycogen biosynthesis. Functionally, catalyzes the formation of the alpha-1,6-glucosidic linkages in glycogen by scission of a 1,4-alpha-linked oligosaccharide from growing alpha-1,4-glucan chains and the subsequent attachment of the oligosaccharide to the alpha-1,6 position. The sequence is that of 1,4-alpha-glucan branching enzyme GlgB from Chlamydia muridarum (strain MoPn / Nigg).